A 599-amino-acid chain; its full sequence is Elongation factor 4 (599 aa).

The tr-type G domain maps to 4–186 (ENIRNFSIIA…EIVTKIPPPQ (183 aa)). GTP-binding positions include 16–21 (DHGKST) and 133–136 (NKID).

The protein belongs to the TRAFAC class translation factor GTPase superfamily. Classic translation factor GTPase family. LepA subfamily.

It is found in the cell inner membrane. It carries out the reaction GTP + H2O = GDP + phosphate + H(+). Functionally, required for accurate and efficient protein synthesis under certain stress conditions. May act as a fidelity factor of the translation reaction, by catalyzing a one-codon backward translocation of tRNAs on improperly translocated ribosomes. Back-translocation proceeds from a post-translocation (POST) complex to a pre-translocation (PRE) complex, thus giving elongation factor G a second chance to translocate the tRNAs correctly. Binds to ribosomes in a GTP-dependent manner. In Geotalea uraniireducens (strain Rf4) (Geobacter uraniireducens), this protein is Elongation factor 4.